Reading from the N-terminus, the 919-residue chain is Glutamate receptor ionotropic, kainate 3 (919 aa).

Positions 1 to 31 (MTAPWRRLRSLVWEYWAGLLVCAFWIPDSRG) are cleaved as a signal peptide. Residues 32-563 (MPHVIRIGGI…VFSFLNPLSP (532 aa)) lie on the Extracellular side of the membrane. N-linked (GlcNAc...) asparagine glycans are attached at residues asparagine 70, asparagine 76, asparagine 278, asparagine 381, asparagine 415, asparagine 426, and asparagine 433. Cysteine 99 and cysteine 350 are disulfide-bonded. L-glutamate is bound by residues proline 518, threonine 520, and arginine 525. N-linked (GlcNAc...) asparagine glycosylation is found at asparagine 548 and asparagine 551. Residues 564 to 584 (DIWMYVLLAYLGVSCVLFVIA) form a helical membrane-spanning segment. Residues 585–636 (RFSPYEWYDAHPCNPGSEVVENNFTLLNSFWFGMGSLMQQGSELMPKALSTR) are Cytoplasmic-facing. The chain crosses the membrane as a helical span at residues 637-657 (IIGGIWWFFTLIIISSYTANL). The Extracellular segment spans residues 658 to 820 (AAFLTVERME…KEASALGIQK (163 aa)). Alanine 691, threonine 692, and glutamate 739 together coordinate L-glutamate. N-linked (GlcNAc...) asparagine glycosylation occurs at asparagine 752. Residues 821 to 841 (IGGIFIVLAAGLVLSVLVAVG) form a helical membrane-spanning segment. Topologically, residues 842–919 (EFVYKLRKTA…CSTSLAPVFP (78 aa)) are cytoplasmic. Serine 869 is subject to Phosphoserine. Lysine 887 participates in a covalent cross-link: Glycyl lysine isopeptide (Lys-Gly) (interchain with G-Cter in SUMO1).

The protein belongs to the glutamate-gated ion channel (TC 1.A.10.1) family. GRIK3 subfamily. Homotetramer, and heterotetramer with either GRIK4 or GRIK5. Can form functional heteromeric receptors with GRIK2. Interacts with PRKCABP. Interacts with NETO2.

Its subcellular location is the cell membrane. It localises to the postsynaptic cell membrane. The enzyme catalyses Ca(2+)(in) = Ca(2+)(out). In terms of biological role, ionotropic glutamate receptor that functions as a cation-permeable ligand-gated ion channel, gated by L-glutamate and the glutamatergic agonist kainic acid. Binding of the excitatory neurotransmitter L-glutamate induces a conformation change, leading to the opening of the cation channel, and thereby converts the chemical signal to an electrical impulse. The receptor then desensitizes rapidly and enters a transient inactive state, characterized by the presence of bound agonist. In association with GRIK2, involved in presynaptic facilitation of glutamate release at hippocampal mossy fiber synapses. This is Glutamate receptor ionotropic, kainate 3 (GRIK3) from Macaca fascicularis (Crab-eating macaque).